Reading from the N-terminus, the 200-residue chain is Protein Nef (200 aa).

Gly-2 is lipidated: N-myristoyl glycine; by host. Position 6 is a phosphoserine; by host (Ser-6). The tract at residues Glu-58 to Glu-60 is acidic; interacts with host PACS1 and PACS2; stabilizes the interaction of NEF/MHC-I with host AP1M1; necessary for MHC-I internalization. Positions Pro-64 to Pro-73 are SH3-binding; interaction with Src family tyrosine kinases. The PxxP; stabilizes the interaction of NEF/MHC-I with host AP1M1; necessary for MHC-I internalization signature appears at Pro-67–Pro-70. The tract at residues Glu-103–Trp-119 is mediates dimerization, Nef-PTE1 interaction. Residues Val-143–Val-175 form a binding to ATP6V1H region. A Dileucine internalization motif; necessary for CD4 internalization motif is present at residues Leu-159–Leu-160. A Diacidic; necessary for CD4 internalization motif is present at residues Glu-169 to Asp-170.

The protein belongs to the lentivirus primate group Nef protein family. In terms of assembly, monomer; cytosolic form. Homodimer; membrane bound form. Interacts with Nef associated p21-activated kinase (PAK2); this interaction activates PAK2. Associates with the Nef-MHC-I-AP1 complex; this complex is required for MHC-I internalization. Interacts (via C-terminus) with host PI3-kinase. Interacts with host PACS1; this interaction seems to be weak. Interacts with host PACS2. Interacts with host LCK and MAPK3; these interactions inhibit the kinase activity of the latter. Interacts with host ATP6V1H; this interaction may play a role in CD4 endocytosis. Associates with the CD4-Nef-AP2 complex; this complex is required for CD4 internalization. Interacts with host AP2 subunit alpha and AP2 subunit sigma2. Interacts with TCR-zeta chain; this interaction up-regulates the Fas ligand (FasL) surface expression. Interacts with host HCK, LYN, and SRC; these interactions activate the Src family kinases. Interacts with MAP3K5; this interaction inhibits the Fas and TNFR-mediated death signals. Interacts with beta-COP and PTE1. Interacts with human RACK1; this increases Nef phosphorylation by PKC. Interacts with TP53; this interaction decreases the half-life of TP53, protecting the infected cell against p53-mediated apoptosis. Post-translationally, the virion-associated Nef proteins are cleaved by the viral protease to release the soluble C-terminal core protein. Nef is probably cleaved concomitantly with viral structural proteins on maturation of virus particles. Myristoylated. In terms of processing, phosphorylated on serine residues, probably by host PKCdelta and theta.

The protein resides in the host cell membrane. It is found in the virion. It localises to the secreted. The protein localises to the host Golgi apparatus membrane. Its function is as follows. Factor of infectivity and pathogenicity, required for optimal virus replication. Alters numerous pathways of T-lymphocyte function and down-regulates immunity surface molecules in order to evade host defense and increase viral infectivity. Alters the functionality of other immunity cells, like dendritic cells, monocytes/macrophages and NK cells. In infected CD4(+) T-lymphocytes, down-regulates the surface MHC-I, mature MHC-II, CD4, CD28, CCR5 and CXCR4 molecules. Mediates internalization and degradation of host CD4 through the interaction of with the cytoplasmic tail of CD4, the recruitment of AP-2 (clathrin adapter protein complex 2), internalization through clathrin coated pits, and subsequent transport to endosomes and lysosomes for degradation. Diverts host MHC-I molecules to the trans-Golgi network-associated endosomal compartments by an endocytic pathway to finally target them for degradation. MHC-I down-regulation may involve AP-1 (clathrin adapter protein complex 1) or possibly Src family kinase-ZAP70/Syk-PI3K cascade recruited by PACS2. In consequence infected cells are masked for immune recognition by cytotoxic T-lymphocytes. Decreasing the number of immune receptors also prevents reinfection by more HIV particles (superinfection). Down-regulates host SERINC3 and SERINC5 thereby excluding these proteins from the viral particles. Virion infectivity is drastically higher when SERINC3 or SERINC5 are excluded from the viral envelope, because these host antiviral proteins impair the membrane fusion event necessary for subsequent virion penetration. Functionally, bypasses host T-cell signaling by inducing a transcriptional program nearly identical to that of anti-CD3 cell activation. Interaction with TCR-zeta chain up-regulates the Fas ligand (FasL). Increasing surface FasL molecules and decreasing surface MHC-I molecules on infected CD4(+) cells send attacking cytotoxic CD8+ T-lymphocytes into apoptosis. In terms of biological role, plays a role in optimizing the host cell environment for viral replication without causing cell death by apoptosis. Protects the infected cells from apoptosis in order to keep them alive until the next virus generation is ready to strike. Inhibits the Fas and TNFR-mediated death signals by blocking MAP3K5/ASK1. Decreases the half-life of TP53, protecting the infected cell against p53-mediated apoptosis. Inhibits the apoptotic signals regulated by the Bcl-2 family proteins through the formation of a Nef/PI3-kinase/PAK2 complex that leads to activation of PAK2 and induces phosphorylation of host BAD. Its function is as follows. Extracellular Nef protein targets CD4(+) T-lymphocytes for apoptosis by interacting with CXCR4 surface receptors. This chain is Protein Nef, found in Homo sapiens (Human).